A 559-amino-acid polypeptide reads, in one-letter code: Phosphatase and actin regulator 3 (559 aa).

Residues 1–65 (MAASEDGSGC…GIRTPPVRRN (65 aa)) are disordered. The segment covering 15 to 24 (GRSQSDPSVL) has biased composition (polar residues). The span at 25-35 (TDSSATSSADA) shows a compositional bias: low complexity. Thr70 carries the phosphothreonine modification. Residues 82-342 (KKKNEKLKQT…VERGKEREEA (261 aa)) form a disordered region. An RPEL 1 repeat occupies 93-118 (SALEKKMAGRQGREELIKKGLLEMME). Over residues 95-113 (LEKKMAGRQGREELIKKGL) the composition is skewed to basic and acidic residues. Over residues 134 to 151 (SVQSEPPTPKSETLTSED) the composition is skewed to polar residues. The segment covering 229–240 (PSPPLLPTPPPK) has biased composition (pro residues). The residue at position 230 (Ser230) is a Phosphoserine. Residue Thr236 is modified to Phosphothreonine. 2 stretches are compositionally biased toward polar residues: residues 248–262 (NVTGQATLFQASSMK) and 270–281 (GQLSTPTGSPHL). Over residues 293-342 (VIEELHRALATKHRQDSFQGRESKGSPKKRLDVRLSRTSSVERGKEREEA) the composition is skewed to basic and acidic residues. A coiled-coil region spans residues 346–369 (DGALENKRTAAKESEENKENLIIN). RPEL repeat units lie at residues 401-426 (ELLAVKLRNRPSKQELEDRNIFPRRT), 439-464 (MKLSKRLSQRPAVEELERRNILKQRN), and 477-502 (QRLTRKLNQRPTVDELRDRKILIRFS). The required for PP1CA binding and inhibition of PP1 activity stretch occupies residues 438-518 (EMKLSKRLSQ…KAQDYDRRAD (81 aa)). A coiled-coil region spans residues 450 to 486 (AVEELERRNILKQRNDQTEQEERREIKQRLTRKLNQR).

This sequence belongs to the phosphatase and actin regulator family. Binds actin and PPP1CA; thus inhibiting the protein phosphatase 1 (PP1) activity. As to expression, abundantly expressed in brain. Also found in several tumors such as lung carcinomas, nervous tumors and HL-60 leukemia cells. Isoform 3 is the major form in U-937, GOTO and HL-60 leukemia cells.

Its subcellular location is the nucleus matrix. The chain is Phosphatase and actin regulator 3 (PHACTR3) from Homo sapiens (Human).